Consider the following 370-residue polypeptide: Translocating chain-associated membrane protein 2 (370 aa).

The Cytoplasmic portion of the chain corresponds to 1–22 (MAFRRRTKSYPLFSQEFIIHNH). Residues 23 to 43 (ADIGFCLVLCVLIGLMFEVTA) traverse the membrane as a helical segment. Topologically, residues 44–75 (KTAFLFILPQYNISVPTADSETVHYHYGPKDL) are extracellular. Asn-55 is a glycosylation site (N-linked (GlcNAc...) asparagine). Residues 76–96 (VTILFYVVITIIFHAVVQEYI) traverse the membrane as a helical segment. The Cytoplasmic portion of the chain corresponds to 97-119 (LDKISKRLHLSKVKHSKFNESGQ). The TLC domain occupies 112–321 (SKFNESGQLL…HSQLRHWREY (210 aa)). The chain crosses the membrane as a helical span at residues 120–140 (LLVFHLSAVAWCFYVIVTEGY). Residues 141-159 (LTNPRSLWEDYPHVYLSFQ) lie on the Extracellular side of the membrane. A helical membrane pass occupies residues 160 to 180 (VKFFYLGQLAYWLHSLPELYF). Residues 181-191 (QKVRKEEVPRQ) lie on the Cytoplasmic side of the membrane. A helical transmembrane segment spans residues 192 to 209 (LQYICLYLLHITGAYLLN). The Extracellular portion of the chain corresponds to 210–214 (LSRLG). The helical transmembrane segment at 215-235 (LILLLLQYSTEALFHMARLFH) threads the bilayer. The Cytoplasmic portion of the chain corresponds to 236 to 250 (FADENNERLFNAWAA). The helical transmembrane segment at 251–271 (VFGVTRLFILTLAVLTIGFGL) threads the bilayer. At 272-287 (ARVENQVFDPEKGNFN) the chain is on the extracellular side. A helical transmembrane segment spans residues 288-308 (TLPCRLGMLLLVCVAQAWLMW). Residues 309 to 370 (RFIHSQLRHW…SSRTKKLKSP (62 aa)) are Cytoplasmic-facing. The tract at residues 332–370 (SAVPRPPAKLLKREPGYHENGVVKAENGTSSRTKKLKSP) is disordered.

It belongs to the TRAM family. Interacts with COL1A1. Interacts with SERCA2B.

It is found in the membrane. Functionally, necessary for collagen type I synthesis. May couple the activity of the ER Ca(2+) pump SERCA2B with the activity of the translocon. This coupling may increase the local Ca(2+) concentration at the site of collagen synthesis, and a high Ca(2+) concentration may be necessary for the function of molecular chaperones involved in collagen folding. Required for proper insertion of the first transmembrane helix N-terminus of TM4SF20 into the ER lumen, may act as a ceramide sensor for regulated alternative translocation (RAT). This chain is Translocating chain-associated membrane protein 2 (Tram2), found in Mus musculus (Mouse).